The following is a 269-amino-acid chain: Ubiquinone/menaquinone biosynthesis C-methyltransferase UbiE (269 aa).

S-adenosyl-L-methionine is bound by residues Thr92, Asp113, and 141–142; that span reads NA.

The protein belongs to the class I-like SAM-binding methyltransferase superfamily. MenG/UbiE family.

The catalysed reaction is a 2-demethylmenaquinol + S-adenosyl-L-methionine = a menaquinol + S-adenosyl-L-homocysteine + H(+). The enzyme catalyses a 2-methoxy-6-(all-trans-polyprenyl)benzene-1,4-diol + S-adenosyl-L-methionine = a 5-methoxy-2-methyl-3-(all-trans-polyprenyl)benzene-1,4-diol + S-adenosyl-L-homocysteine + H(+). It participates in quinol/quinone metabolism; menaquinone biosynthesis; menaquinol from 1,4-dihydroxy-2-naphthoate: step 2/2. It functions in the pathway cofactor biosynthesis; ubiquinone biosynthesis. Its function is as follows. Methyltransferase required for the conversion of demethylmenaquinol (DMKH2) to menaquinol (MKH2) and the conversion of 2-polyprenyl-6-methoxy-1,4-benzoquinol (DDMQH2) to 2-polyprenyl-3-methyl-6-methoxy-1,4-benzoquinol (DMQH2). The chain is Ubiquinone/menaquinone biosynthesis C-methyltransferase UbiE from Brucella melitensis biotype 2 (strain ATCC 23457).